A 97-amino-acid chain; its full sequence is MKKRGGRILWLVYLDSTIPKSRGRIIAKGVAVPKPTIQEVEEALRRLGYSYESYPEKKYPPLWFEERARGYFLVKSDEKPASIAAKVAEEIRRIRGQ.

It belongs to the SRP19 family. Part of the signal recognition particle protein translocation system, which is composed of SRP and FtsY. Archaeal SRP consists of a 7S RNA molecule of 300 nucleotides and two protein subunits: SRP54 and SRP19.

The protein localises to the cytoplasm. Its function is as follows. Involved in targeting and insertion of nascent membrane proteins into the cytoplasmic membrane. Binds directly to 7S RNA and mediates binding of the 54 kDa subunit of the SRP. This is Signal recognition particle 19 kDa protein from Pyrobaculum calidifontis (strain DSM 21063 / JCM 11548 / VA1).